The primary structure comprises 151 residues: Large ribosomal subunit protein bL9 (151 aa).

Belongs to the bacterial ribosomal protein bL9 family.

Binds to the 23S rRNA. The chain is Large ribosomal subunit protein bL9 from Prochlorococcus marinus (strain MIT 9312).